The sequence spans 260 residues: Imidazole glycerol phosphate synthase subunit HisF (260 aa).

Residues Asp11 and Asp130 contribute to the active site.

The protein belongs to the HisA/HisF family. Heterodimer of HisH and HisF.

Its subcellular location is the cytoplasm. It carries out the reaction 5-[(5-phospho-1-deoxy-D-ribulos-1-ylimino)methylamino]-1-(5-phospho-beta-D-ribosyl)imidazole-4-carboxamide + L-glutamine = D-erythro-1-(imidazol-4-yl)glycerol 3-phosphate + 5-amino-1-(5-phospho-beta-D-ribosyl)imidazole-4-carboxamide + L-glutamate + H(+). Its pathway is amino-acid biosynthesis; L-histidine biosynthesis; L-histidine from 5-phospho-alpha-D-ribose 1-diphosphate: step 5/9. In terms of biological role, IGPS catalyzes the conversion of PRFAR and glutamine to IGP, AICAR and glutamate. The HisF subunit catalyzes the cyclization activity that produces IGP and AICAR from PRFAR using the ammonia provided by the HisH subunit. In Thermomicrobium roseum (strain ATCC 27502 / DSM 5159 / P-2), this protein is Imidazole glycerol phosphate synthase subunit HisF.